Here is a 102-residue protein sequence, read N- to C-terminus: Ferredoxin, 2Fe-2S (102 aa).

[2Fe-2S] cluster is bound by residues C11, C24, C56, and C60.

Belongs to the 2Fe2S Shethna-type ferredoxin family. [2Fe-2S] cluster serves as cofactor.

Ferredoxins are iron-sulfur proteins that transfer electrons in a wide variety of metabolic reactions. This chain is Ferredoxin, 2Fe-2S, found in Clostridium pasteurianum.